Reading from the N-terminus, the 317-residue chain is Melanocyte-stimulating hormone receptor (317 aa).

Residues M1–E37 lie on the Extracellular side of the membrane. N-linked (GlcNAc...) asparagine glycosylation is present at N29. Residues V38–I63 traverse the membrane as a helical segment. Residues A64–P72 lie on the Cytoplasmic side of the membrane. A helical membrane pass occupies residues M73–L93. Topologically, residues E94–N118 are extracellular. The chain crosses the membrane as a helical span at residues V119–V140. Residues D141 to R163 lie on the Cytoplasmic side of the membrane. The chain crosses the membrane as a helical span at residues A164–Y183. Residues D184–C191 are Extracellular-facing. Residues L192–L211 traverse the membrane as a helical segment. The Cytoplasmic portion of the chain corresponds to A212–A240. The helical transmembrane segment at V241–L266 threads the bilayer. At C267–N279 the chain is on the extracellular side. A helical transmembrane segment spans residues F280–F300. The Cytoplasmic segment spans residues H301–W317. The S-palmitoyl cysteine moiety is linked to residue C315.

The protein belongs to the G-protein coupled receptor 1 family. As to quaternary structure, interacts with MGRN1, but does not undergo MGRN1-mediated ubiquitination; this interaction competes with GNAS-binding and thus inhibits agonist-induced cAMP production. Interacts with OPN3; the interaction results in a decrease in MC1R-mediated cAMP signaling and ultimately a decrease in melanin production in melanocytes. As to expression, expressed in melanocytes. Expressed in corticoadrenal tissue.

It localises to the cell membrane. Its function is as follows. Receptor for MSH (alpha, beta and gamma) and ACTH. The activity of this receptor is mediated by G proteins which activate adenylate cyclase. Mediates melanogenesis, the production of eumelanin (black/brown) and phaeomelanin (red/yellow), via regulation of cAMP signaling in melanocytes. This Homo sapiens (Human) protein is Melanocyte-stimulating hormone receptor (MC1R).